The sequence spans 483 residues: Regulatory protein ViaA (483 aa).

Belongs to the ViaA family. As to quaternary structure, homodimer. Interacts with RavA.

Its subcellular location is the cytoplasm. In terms of biological role, component of the RavA-ViaA chaperone complex, which may act on the membrane to optimize the function of some of the respiratory chains. ViaA stimulates the ATPase activity of RavA. The protein is Regulatory protein ViaA of Salmonella agona (strain SL483).